We begin with the raw amino-acid sequence, 518 residues long: Protease Do-like 4, mitochondrial (518 aa).

Residues 1–23 constitute a mitochondrion transit peptide; sequence MLFRFLQTLARFCRFLLISVLGF. The interval 98 to 262 is serine protease; the sequence is ESGGSGFVIS…IPTPVIKHFL (165 aa). Catalysis depends on charge relay system residues H116, D147, and S225. One can recognise a PDZ domain in the interval 278-358; it reads DISYQLMENS…HFVSMKKLDE (81 aa).

It belongs to the peptidase S1C family.

The protein resides in the mitochondrion membrane. In terms of biological role, putative serine protease. The protein is Protease Do-like 4, mitochondrial (DEGP4) of Arabidopsis thaliana (Mouse-ear cress).